The chain runs to 584 residues: ATP synthase subunit alpha, mitochondrial (584 aa).

Residues 1-24 constitute a mitochondrion transit peptide; the sequence is MRRFGSKFASGLASRCALACPLAS. ATP contacts are provided by residues 207-214 and glutamine 464; that span reads DRQTGKTS.

This sequence belongs to the ATPase alpha/beta chains family. F-type ATPases have 2 components, F(1) - the catalytic core - and F(o) - the membrane proton channel. F(1) has five subunits: alpha(3), beta(3), gamma(1), delta(1), epsilon(1), plus the additional subunit P18 (Tb427.05.1710) that is not present in F(1)F(o) ATP synthase from metazoa. Subunit P18 (Tb927.5.1710) interacts with the alpha subunit with a 1:1 stoichiometry; the interaction is direct. Subunit gamma is part of the central stalk. F(o) has three main subunits: a, b and c. The trypanosomal ATPase complex contains additional subunits that are not present in the F(1)F(o) ATP synthase from metazoa.

It localises to the mitochondrion. It is found in the mitochondrion inner membrane. Its function is as follows. Mitochondrial membrane ATP synthase (F(1)F(o) ATP synthase) produces ATP from ADP in the presence of a proton gradient across the membrane which is generated by electron transport complexes of the respiratory chain. F-type ATPases consist of two structural domains, F(1) - containing the extramembraneous catalytic core, and F(o) - containing the membrane proton channel, linked together by a central stalk and a peripheral stalk. During catalysis, ATP synthesis in the catalytic domain of F(1) is coupled via a rotary mechanism of the central stalk subunits to proton translocation. Subunits alpha and beta form the catalytic core in F(1). Rotation of the central stalk against the surrounding alpha(3)beta(3) subunits leads to hydrolysis of ATP in three separate catalytic sites on the beta subunits. Subunit alpha does not bear the catalytic high-affinity ATP-binding sites. Contrary to the procyclic, insect form that requires F(1)F(o) ATP synthase for ATP synthesis, the bloodstream form relies on ATP hydrolysis by F(1)F(o) ATP synthase to maintain its mitochondrial membrane potential. In Trypanosoma brucei brucei, this protein is ATP synthase subunit alpha, mitochondrial.